Here is a 454-residue protein sequence, read N- to C-terminus: tRNA modification GTPase MnmE (454 aa).

(6S)-5-formyl-5,6,7,8-tetrahydrofolate-binding residues include Arg23, Glu80, and Lys120. Residues 216-377 (GMKVVIAGRP…LRDHLKQSMG (162 aa)) form the TrmE-type G domain. A K(+)-binding site is contributed by Asn226. GTP-binding positions include 226-231 (NAGKSS), 245-251 (TDIAGTT), 270-273 (DTAG), 335-338 (NKAD), and 358-360 (SAR). Ser230 serves as a coordination point for Mg(2+). Residues Thr245, Ile247, and Thr250 each coordinate K(+). Thr251 serves as a coordination point for Mg(2+). Residue Lys454 coordinates (6S)-5-formyl-5,6,7,8-tetrahydrofolate.

Belongs to the TRAFAC class TrmE-Era-EngA-EngB-Septin-like GTPase superfamily. TrmE GTPase family. In terms of assembly, homodimer. Heterotetramer of two MnmE and two MnmG subunits. The cofactor is K(+).

Its subcellular location is the cytoplasm. In terms of biological role, exhibits a very high intrinsic GTPase hydrolysis rate. Involved in the addition of a carboxymethylaminomethyl (cmnm) group at the wobble position (U34) of certain tRNAs, forming tRNA-cmnm(5)s(2)U34. This is tRNA modification GTPase MnmE from Yersinia pseudotuberculosis serotype O:1b (strain IP 31758).